Reading from the N-terminus, the 119-residue chain is NADH-quinone oxidoreductase subunit A (119 aa).

The next 3 membrane-spanning stretches (helical) occupy residues 9–29, 63–83, and 88–108; these read VLLFILVGMGVGVVPLVLGYV, LVAILFILFDLEIAFLLPWAV, and VGGAGFAAVLIFLTVLVVGFV.

It belongs to the complex I subunit 3 family. As to quaternary structure, NDH-1 is composed of 14 different subunits. Subunits NuoA, H, J, K, L, M, N constitute the membrane sector of the complex.

The protein localises to the cell inner membrane. It carries out the reaction a quinone + NADH + 5 H(+)(in) = a quinol + NAD(+) + 4 H(+)(out). In terms of biological role, NDH-1 shuttles electrons from NADH, via FMN and iron-sulfur (Fe-S) centers, to quinones in the respiratory chain. The immediate electron acceptor for the enzyme in this species is believed to be ubiquinone. Couples the redox reaction to proton translocation (for every two electrons transferred, four hydrogen ions are translocated across the cytoplasmic membrane), and thus conserves the redox energy in a proton gradient. The protein is NADH-quinone oxidoreductase subunit A of Delftia acidovorans (strain DSM 14801 / SPH-1).